We begin with the raw amino-acid sequence, 152 residues long: Cuticle protein 64 (152 aa).

Tandem repeats lie at residues 27–30 (AAPA), 33–37 (AAPAV), 39–42 (AAPA), 86–89 (AAPV), 92–95 (AAPA), 98–101 (AAPA), and 127–130 (AAPA).

Its function is as follows. Component of the cuticle of migratory locust which contains more than 100 different structural proteins. The sequence is that of Cuticle protein 64 from Locusta migratoria (Migratory locust).